The primary structure comprises 388 residues: Formate-dependent phosphoribosylglycinamide formyltransferase (388 aa).

N(1)-(5-phospho-beta-D-ribosyl)glycinamide-binding positions include 20-21 and Glu80; that span reads EL. ATP-binding positions include Arg112, Lys153, 158–163, 193–196, and Glu201; these read SSGKGQ and EEFI. One can recognise an ATP-grasp domain in the interval 117-306; it reads RLAFEKLGLR…EFEIHARAIL (190 aa). Residues Glu265 and Glu277 each contribute to the Mg(2+) site. N(1)-(5-phospho-beta-D-ribosyl)glycinamide is bound by residues Asp284, Lys352, and 359 to 360; that span reads RR.

It belongs to the PurK/PurT family. As to quaternary structure, homodimer.

The catalysed reaction is N(1)-(5-phospho-beta-D-ribosyl)glycinamide + formate + ATP = N(2)-formyl-N(1)-(5-phospho-beta-D-ribosyl)glycinamide + ADP + phosphate + H(+). The protein operates within purine metabolism; IMP biosynthesis via de novo pathway; N(2)-formyl-N(1)-(5-phospho-D-ribosyl)glycinamide from N(1)-(5-phospho-D-ribosyl)glycinamide (formate route): step 1/1. In terms of biological role, involved in the de novo purine biosynthesis. Catalyzes the transfer of formate to 5-phospho-ribosyl-glycinamide (GAR), producing 5-phospho-ribosyl-N-formylglycinamide (FGAR). Formate is provided by PurU via hydrolysis of 10-formyl-tetrahydrofolate. The polypeptide is Formate-dependent phosphoribosylglycinamide formyltransferase (Methanococcus maripaludis (strain C7 / ATCC BAA-1331)).